A 652-amino-acid chain; its full sequence is DNA ligase (652 aa).

Residues 29-33 (DSDYD), 78-79 (SL), and glutamate 107 contribute to the NAD(+) site. Lysine 109 (N6-AMP-lysine intermediate) is an active-site residue. NAD(+) is bound by residues arginine 130, glutamate 164, lysine 278, and lysine 302. Cysteine 395, cysteine 398, cysteine 413, and cysteine 418 together coordinate Zn(2+). Residues 577 to 652 (NSDAALFGLT…IEDEDWLRQL (76 aa)) form the BRCT domain.

This sequence belongs to the NAD-dependent DNA ligase family. LigA subfamily. It depends on Mg(2+) as a cofactor. Requires Mn(2+) as cofactor.

It carries out the reaction NAD(+) + (deoxyribonucleotide)n-3'-hydroxyl + 5'-phospho-(deoxyribonucleotide)m = (deoxyribonucleotide)n+m + AMP + beta-nicotinamide D-nucleotide.. In terms of biological role, DNA ligase that catalyzes the formation of phosphodiester linkages between 5'-phosphoryl and 3'-hydroxyl groups in double-stranded DNA using NAD as a coenzyme and as the energy source for the reaction. It is essential for DNA replication and repair of damaged DNA. This Streptococcus pyogenes serotype M3 (strain ATCC BAA-595 / MGAS315) protein is DNA ligase.